A 343-amino-acid chain; its full sequence is Dihydroorotase (343 aa).

His13 and His15 together coordinate Zn(2+). Substrate is bound by residues 15-17 (HLR) and Asn41. 3 residues coordinate Zn(2+): Lys99, His136, and His174. Lys99 is subject to N6-carboxylysine. A substrate-binding site is contributed by His136. Leu219 contacts substrate. Residue Asp247 coordinates Zn(2+). Asp247 is an active-site residue. Substrate-binding residues include His251 and Ala263.

This sequence belongs to the metallo-dependent hydrolases superfamily. DHOase family. Class II DHOase subfamily. In terms of assembly, homodimer. Zn(2+) serves as cofactor.

It catalyses the reaction (S)-dihydroorotate + H2O = N-carbamoyl-L-aspartate + H(+). Its pathway is pyrimidine metabolism; UMP biosynthesis via de novo pathway; (S)-dihydroorotate from bicarbonate: step 3/3. Its function is as follows. Catalyzes the reversible cyclization of carbamoyl aspartate to dihydroorotate. This Shewanella oneidensis (strain ATCC 700550 / JCM 31522 / CIP 106686 / LMG 19005 / NCIMB 14063 / MR-1) protein is Dihydroorotase.